Reading from the N-terminus, the 426-residue chain is Ammonium transporter Rh type A (426 aa).

At 1 to 4 (MRFK) the chain is on the cytoplasmic side. A helical transmembrane segment spans residues 5-25 (FPLMAIGLEVVMIVLFALFVQ). Topologically, residues 26 to 54 (YETSVNTSRNPNETESAAMDVEKTMESYP) are extracellular. N-linked (GlcNAc...) asparagine glycans are attached at residues Asn31 and Asn37. The chain crosses the membrane as a helical span at residues 55–75 (FFQDVHIMVFAGFGFLMTFLW). The Cytoplasmic segment spans residues 76 to 78 (KYG). Residues 79 to 99 (FSGVGINLLIAALGLQWGTII) traverse the membrane as a helical segment. The Extracellular portion of the chain corresponds to 100 to 124 (QGIFRSHGQKFLIEMKNMIHADFST). Transmembrane regions (helical) follow at residues 125-145 (VTVL…QMLI) and 146-166 (MTIL…KILW). Over 167–170 (ASDT) the chain is Extracellular. A helical membrane pass occupies residues 171–191 (GESMTIHAFGAYFGLAVAGIL). At 192–210 (YRSGLKEKHSNEESVYHSD) the chain is on the cytoplasmic side. The helical transmembrane segment at 211–231 (LFAMIGSLFLWIFWPSFNSAT) threads the bilayer. The Extracellular segment spans residues 232–241 (ADEAKKQYRA). A helical transmembrane segment spans residues 242-262 (IVNTYFSLAASVVTAYACSSL). Over 263 to 270 (LESRGKLN) the chain is Cytoplasmic. The chain crosses the membrane as a helical span at residues 271 to 288 (MVHIQNATLAGGVAVGTC). The Extracellular segment spans residues 289–292 (ADME). A helical transmembrane segment spans residues 293-313 (IPPYYAMIIGSIAGAVSVFGF). Over 314–331 (KFLTPLFTTKLRIHDTCG) the chain is Cytoplasmic. Residues 332–352 (VHNLHGLPGVIGGLAGIITVA) form a helical membrane-spanning segment. Topologically, residues 353–371 (LEESDSTKTVSQAAALGSS) are extracellular. A helical transmembrane segment spans residues 372–392 (IATALVGGLITGAILKIPFWA). Residues 393–426 (QPPDEDCYDDSVYWEVPERKEYDNHFHELLSTLH) lie on the Cytoplasmic side of the membrane.

The protein belongs to the ammonium transporter (TC 2.A.49) family. Rh subfamily. Homodimer. Heterotrimer; a RHCE monomer interacts with a RHAG homodimer. Component of the ankyrin-1 complex in the erythrocyte, composed of ANK1, RHCE, RHAG, SLC4A1, EPB42, GYPA, GYPB and AQP1. Interacts with GYPB (via the N-terminal); this interaction bridges the (RHAG)2(RHCE) heterotrimer with the SLC4A1 Band 3 I dimer complexed with GYPA. Post-translationally, glycosylated.

The protein resides in the membrane. It carries out the reaction methylamine(out) = methylamine(in). The enzyme catalyses NH4(+)(in) = NH4(+)(out). It catalyses the reaction CO2(out) = CO2(in). Functionally, component of the ankyrin-1 complex, a multiprotein complex involved in the stability and shape of the erythrocyte membrane. Heterotrimer with RHCE (RHAG)2(RHCE), that transports ammonium and its related derivative methylammonium, in both neutral and ionic forms, across the erythrocyte membrane. The transport of NH4(+) is electrogenic and masks the NH3 transport. Also, may act as a CO2 channel. Moreover in erythrocyte, regulates RHD membrane expression and is associated with rhesus blood group antigen expression. The protein is Ammonium transporter Rh type A of Bos taurus (Bovine).